Reading from the N-terminus, the 1529-residue chain is uncharacterized protein (1529 aa).

Low complexity predominate over residues 1–11; it reads MDKNNNNNNSN. 7 disordered regions span residues 1-85, 335-371, 660-694, 798-843, 1016-1035, 1334-1364, and 1454-1497; these read MDKN…SKGV, LLSN…WSSS, LPNL…TATA, NCNI…SSYS, SSLP…NTNN, QQQQ…QLQQ, and QQQV…SRLP. Over residues 24-42 the composition is skewed to polar residues; it reads QKRVQNPSFSSGQSRTVPS. Positions 51-79 are enriched in low complexity; that stretch reads ISSSSSSSSISTTNNTTTTTTSGTGSTSS. The segment covering 810 to 833 has biased composition (low complexity); sequence NNNNNNNNNNNNNNNNNNNNNNNN. Composition is skewed to polar residues over residues 834–843 and 1016–1027; these read VLPRSNSSYS and SSLPISQNLSDD. The span at 1454-1494 shows a compositional bias: low complexity; it reads QQQVQTPSSPQTLASLLGNSSSNTLTSSSSTLSLNESSTLS.

This is an uncharacterized protein from Dictyostelium discoideum (Social amoeba).